Consider the following 491-residue polypeptide: Protein nucleotidyltransferase YdiU (491 aa).

8 residues coordinate ATP: Gly92, Gly94, Arg95, Lys115, Asp127, Gly128, Arg178, and Arg185. Catalysis depends on Asp254, which acts as the Proton acceptor. Positions 255 and 264 each coordinate Mg(2+). ATP is bound at residue Asp264.

Belongs to the SELO family. The cofactor is Mg(2+). It depends on Mn(2+) as a cofactor.

The enzyme catalyses L-seryl-[protein] + ATP = 3-O-(5'-adenylyl)-L-seryl-[protein] + diphosphate. The catalysed reaction is L-threonyl-[protein] + ATP = 3-O-(5'-adenylyl)-L-threonyl-[protein] + diphosphate. It carries out the reaction L-tyrosyl-[protein] + ATP = O-(5'-adenylyl)-L-tyrosyl-[protein] + diphosphate. It catalyses the reaction L-histidyl-[protein] + UTP = N(tele)-(5'-uridylyl)-L-histidyl-[protein] + diphosphate. The enzyme catalyses L-seryl-[protein] + UTP = O-(5'-uridylyl)-L-seryl-[protein] + diphosphate. The catalysed reaction is L-tyrosyl-[protein] + UTP = O-(5'-uridylyl)-L-tyrosyl-[protein] + diphosphate. Functionally, nucleotidyltransferase involved in the post-translational modification of proteins. It can catalyze the addition of adenosine monophosphate (AMP) or uridine monophosphate (UMP) to a protein, resulting in modifications known as AMPylation and UMPylation. In Mycolicibacterium paratuberculosis (strain ATCC BAA-968 / K-10) (Mycobacterium paratuberculosis), this protein is Protein nucleotidyltransferase YdiU.